The chain runs to 410 residues: MGEKPGTRVFKKSSPNCKLTVYLGKRDFVDHLDKVDPVDGVVLVDPDYLKDRKVFVTLTCAFRYGREDLDVLGLSFRKDLFIATYQAFPPMPNPPRPPTRLQDRLLKKLGQHAHPFFFTIPQNLPCSVTLQPGPEDTGKACGVDFEIRAFCAKSIEEKSHKRNSVRLIIRKVQFAPETPGPQPSAETTRHFLMSDRRSLHLEASLDKELYYHGEPLNVNVHVTNNSAKTVKKIRVSVRQYADICLFSTAQYKCPVAQLEQDDQVSPSSTFCKVYTITPLLSDNREKRGLALDGQLKHEDTNLASSTIVKEGANKEVLGILVSYRVKVKLVVSRGGDVSVELPFVLMHPKPHDHITLPRPQSAPRETDVPVDTNLIEFDTNYATDDDIVFEDFARLRLKGMKDDDCDDQFC.

Residue Tyr48 is modified to Phosphotyrosine. Residues Pro176 and Pro181 each carry the hydroxyproline; by PHD2 modification. Residues 241–410 (ADICLFSTAQ…KDDDCDDQFC (170 aa)) form an interaction with TRAF6 region. Ser361 carries the post-translational modification Phosphoserine. The interval 364-410 (RETDVPVDTNLIEFDTNYATDDDIVFEDFARLRLKGMKDDDCDDQFC) is interaction with AP2B1. The residue at position 383 (Thr383) is a Phosphothreonine. The [DE]-X(1,2)-F-X-X-[FL]-X-X-X-R motif signature appears at 386-396 (DIVFEDFARLR).

The protein belongs to the arrestin family. Homooligomer; the self-association is mediated by InsP6-binding. Heterooligomer with ARRB1; the association is mediated by InsP6-binding. Interacts with ADRB2 and CHRM2. Interacts with PDE4A. Interacts with PDE4D. Interacts with MAPK10, MAPK1 and MAPK3. Interacts with DRD2. Interacts with FSHR. Interacts with CLTC. Interacts with HTR2C. Interacts with CCR5. Interacts with CXCR4. Interacts with SRC. Interacts with DUSP16; the interaction is interrupted by stimulation of AGTR1 and activation of MAPK10. Interacts with CHUK; the interaction is enhanced stimulation of ADRB2. Interacts with RELA. Interacts with MDM2; the interaction is enhanced by activation of GPCRs. Interacts with SLC9A5. Interacts with TRAF6. Interacts with IGF1R. Interacts with ENG. Interacts with ARRB2. Interacts with KIR2DL1, KIR2DL3 and KIR2DL4. Interacts with LDLR. Interacts with AP2B1. Interacts with C5AR1. Interacts with RAF1. Interacts with MAP2K1. Interacts with MAPK1. Interacts with MAPK10; the interaction enhances MAPK10 activation by MAP3K5. Interacts with MAP2K4; the interaction is enhanced by presence of MAP3K5 and MAPK10. Interacts with MAP3K5. Interacts with AKT1. Interacts with IKBKB and MAP3K14. Interacts with SMO (activated). Interacts with GSK3A and GSK3B. Interacts with CXCR4; the interaction is dependent on C-terminal phosphorylation of CXCR4 and allows activation of MAPK1 and MAPK3. Interacts with GPR143. Interacts with HCK and CXCR1 (phosphorylated). Associates with protein phosphatase 2A (PP2A). Interacts with ACKR3 and ACKR4. Interacts with ARRDC1; the interaction is direct. Interacts with GPR61, GPR62 and GPR135. Interacts (via NACHT and LRR domains) with NLRP3; this interaction is direct and inducible by omega-3 polyunsaturated fatty acids (PUFAs). Interacts with FFAR4 (via C-terminus); this interaction is stimulated by long-chain fatty acids (LCFAs). Interacts with GPR35. Interacts with GPR84. Interacts with TIGIT; this interaction inhibits the NF-kappa-B pathway. Interacts with TGFBR3. In terms of processing, phosphorylated at Thr-383 in the cytoplasm; probably dephosphorylated at the plasma membrane. The phosphorylation does not regulate internalization and recycling of ADRB2, interaction with clathrin or AP2B1. Post-translationally, the ubiquitination status appears to regulate the formation and trafficking of beta-arrestin-GPCR complexes and signaling. Ubiquitination appears to occur GPCR-specific. Ubiquitinated by MDM2; the ubiquitination is required for rapid internalization of ADRB2. Deubiquitinated by USP33; the deubiquitination leads to a dissociation of the beta-arrestin-GPCR complex. Stimulation of a class A GPCR, such as ADRB2, induces transient ubiquitination and subsequently promotes association with USP33. Stimulation of a class B GPCR promotes a sustained ubiquitination. Deubiquitinated by USP20; allowing USP20 to deubiquitinate TRAF6 leading to inhibition of NF-kappa-B signaling. Hydroxylation by PHD2 modulates the rate of internalization by slowing down recruitment to the plasma membrane and inhibiting subsequent co-internalization with class A receptors. As to expression, predominantly localized in neuronal tissues and in the spleen.

It localises to the cytoplasm. The protein resides in the nucleus. It is found in the cell membrane. The protein localises to the membrane. Its subcellular location is the clathrin-coated pit. It localises to the cytoplasmic vesicle. Its function is as follows. Functions in regulating agonist-mediated G-protein coupled receptor (GPCR) signaling by mediating both receptor desensitization and resensitization processes. During homologous desensitization, beta-arrestins bind to the GPRK-phosphorylated receptor and sterically preclude its coupling to the cognate G-protein; the binding appears to require additional receptor determinants exposed only in the active receptor conformation. The beta-arrestins target many receptors for internalization by acting as endocytic adapters (CLASPs, clathrin-associated sorting proteins) and recruiting the GPRCs to the adapter protein 2 complex 2 (AP-2) in clathrin-coated pits (CCPs). However, the extent of beta-arrestin involvement appears to vary significantly depending on the receptor, agonist and cell type. Internalized arrestin-receptor complexes traffic to intracellular endosomes, where they remain uncoupled from G-proteins. Two different modes of arrestin-mediated internalization occur. Class A receptors, like ADRB2, OPRM1, ENDRA, D1AR and ADRA1B dissociate from beta-arrestin at or near the plasma membrane and undergo rapid recycling. Class B receptors, like AVPR2, AGTR1, NTSR1, TRHR and TACR1 internalize as a complex with arrestin and traffic with it to endosomal vesicles, presumably as desensitized receptors, for extended periods of time. Receptor resensitization then requires that receptor-bound arrestin is removed so that the receptor can be dephosphorylated and returned to the plasma membrane. Mediates endocytosis of CCR7 following ligation of CCL19 but not CCL21. Involved in internalization of P2RY1, P2RY4, P2RY6 and P2RY11 and ATP-stimulated internalization of P2RY2. Involved in phosphorylation-dependent internalization of OPRD1 and subsequent recycling or degradation. Involved in ubiquitination of IGF1R. Beta-arrestins function as multivalent adapter proteins that can switch the GPCR from a G-protein signaling mode that transmits short-lived signals from the plasma membrane via small molecule second messengers and ion channels to a beta-arrestin signaling mode that transmits a distinct set of signals that are initiated as the receptor internalizes and transits the intracellular compartment. Acts as a signaling scaffold for MAPK pathways such as MAPK1/3 (ERK1/2) and MAPK10 (JNK3). ERK1/2 and JNK3 activated by the beta-arrestin scaffold are largely excluded from the nucleus and confined to cytoplasmic locations such as endocytic vesicles, also called beta-arrestin signalosomes. Acts as a signaling scaffold for the AKT1 pathway. GPCRs for which the beta-arrestin-mediated signaling relies on both ARRB1 and ARRB2 (codependent regulation) include ADRB2, F2RL1 and PTH1R. For some GPCRs the beta-arrestin-mediated signaling relies on either ARRB1 or ARRB2 and is inhibited by the other respective beta-arrestin form (reciprocal regulation). Increases ERK1/2 signaling in AGTR1- and AVPR2-mediated activation (reciprocal regulation). Involved in CCR7-mediated ERK1/2 signaling involving ligand CCL19. Is involved in type-1A angiotensin II receptor/AGTR1-mediated ERK activity. Is involved in type-1A angiotensin II receptor/AGTR1-mediated MAPK10 activity. Is involved in dopamine-stimulated AKT1 activity in the striatum by disrupting the association of AKT1 with its negative regulator PP2A. Involved in AGTR1-mediated chemotaxis. Appears to function as signaling scaffold involved in regulation of MIP-1-beta-stimulated CCR5-dependent chemotaxis. Involved in attenuation of NF-kappa-B-dependent transcription in response to GPCR or cytokine stimulation by interacting with and stabilizing CHUK. Suppresses UV-induced NF-kappa-B-dependent activation by interacting with CHUK. The function is promoted by stimulation of ADRB2 and dephosphorylation of ARRB2. Involved in IL8-mediated granule release in neutrophils. Involved in p53/TP53-mediated apoptosis by regulating MDM2 and reducing the MDM2-mediated degradation of p53/TP53. May serve as nuclear messenger for GPCRs. Upon stimulation of OR1D2, may be involved in regulation of gene expression during the early processes of fertilization. Also involved in regulation of receptors other than GPCRs. Involved in endocytosis of TGFBR2 and TGFBR3 and down-regulates TGF-beta signaling such as NF-kappa-B activation. Involved in endocytosis of low-density lipoprotein receptor/LDLR. Involved in endocytosis of smoothened homolog/Smo, which also requires GRK2. Involved in endocytosis of SLC9A5. Involved in endocytosis of ENG and subsequent TGF-beta-mediated ERK activation and migration of epithelial cells. Involved in Toll-like receptor and IL-1 receptor signaling through the interaction with TRAF6 which prevents TRAF6 autoubiquitination and oligomerization required for activation of NF-kappa-B and JUN. Involved in insulin resistance by acting as insulin-induced signaling scaffold for SRC, AKT1 and INSR. Involved in regulation of inhibitory signaling of natural killer cells by recruiting PTPN6 and PTPN11 to KIR2DL1. Involved in the internalization of the atypical chemokine receptor ACKR3. Acts as an adapter protein coupling FFAR4 receptor to specific downstream signaling pathways, as well as mediating receptor endocytosis. During the activation step of NLRP3 inflammasome, directly associates with NLRP3 leading to inhibition of pro-inflammatory cytokine release and inhibition of inflammation. This Mus musculus (Mouse) protein is Beta-arrestin-2 (Arrb2).